The primary structure comprises 984 residues: Respiratory nitrate reductase subunit alpha (984 aa).

The interval 1-43 (MSRNDASQLDDGETTAESPPDDQANDAPEVGDPPGDPVDADSG) is disordered. The segment covering 8–24 (QLDDGETTAESPPDDQA) has biased composition (acidic residues). Residues 103–167 (DSVSRSTHSV…CYTDYVNADQ (65 aa)) form the 4Fe-4S Mo/W bis-MGD-type domain. [4Fe-4S] cluster contacts are provided by H110, C114, C118, and C153. D249 lines the Mo-bis(molybdopterin guanine dinucleotide) pocket.

This sequence belongs to the prokaryotic molybdopterin-containing oxidoreductase family. In terms of assembly, probable multiprotein complex; a catalytic heterodimer of an alpha and beta chain is proposed to associate with additional subunits involved in membrane attachment and electron transfer. It depends on [4Fe-4S] cluster as a cofactor. Mo-bis(molybdopterin guanine dinucleotide) is required as a cofactor. Exported by the Tat system.

It is found in the cell membrane. It catalyses the reaction nitrate + a quinol = a quinone + nitrite + H2O. With respect to regulation, inhibited by cyanide, azide and antimycin A. Enzyme stability is not dependent on salt concentration. Functionally, the respiratory membrane-bound nitrate reductase enzyme complex plays a role in generation of metabolic energy by using nitrate as a terminal electron acceptor during anaerobic conditions. The alpha chain is the actual site of nitrate reduction. This chain is Respiratory nitrate reductase subunit alpha (narG), found in Haloferax mediterranei (strain ATCC 33500 / DSM 1411 / JCM 8866 / NBRC 14739 / NCIMB 2177 / R-4) (Halobacterium mediterranei).